An 88-amino-acid chain; its full sequence is Homeobox protein knotted-1-like 1 (88 aa).

Residues 4-24 (ELKLELKQGFKSRIEDVREEI) form the ELK domain. A DNA-binding region (homeobox; TALE-type) is located at residues 25–88 (LRKRRAGKLP…NQRKRNWHNN (64 aa)).

It belongs to the TALE/KNOX homeobox family. As to expression, highly expressed in the roots.

Its subcellular location is the nucleus. The protein is Homeobox protein knotted-1-like 1 (KNOX1) of Zea mays (Maize).